A 788-amino-acid chain; its full sequence is Ribonucleoside-diphosphate reductase large subunit (788 aa).

One can recognise an ATP-cone domain in the interval 7 to 98 (TYVVKRDGRK…VSNLHKKTNK (92 aa)). ATP is bound by residues 11–12 (KR), 17–23 (EDVHFDK), threonine 59, and aspartate 63. GDP is bound by residues serine 208 and serine 223. A disulfide bridge links cysteine 224 with cysteine 450. Residues 232–234 (DSI), lysine 249, arginine 262, and 269–270 (AG) contribute to the dTTP site. Asparagine 433 contributes to the GDP binding site. The active-site Proton acceptor is asparagine 433. Cysteine 435 serves as the catalytic Cysteine radical intermediate. GDP-binding positions include glutamate 437 and 610–613 (TAST). Glutamate 437 functions as the Proton acceptor in the catalytic mechanism.

This sequence belongs to the ribonucleoside diphosphate reductase large chain family. In terms of assembly, heterodimer of a large and a small subunit.

The enzyme catalyses a 2'-deoxyribonucleoside 5'-diphosphate + [thioredoxin]-disulfide + H2O = a ribonucleoside 5'-diphosphate + [thioredoxin]-dithiol. Its activity is regulated as follows. Under complex allosteric control mediated by deoxynucleoside triphosphates and ATP binding to separate specificity and activation sites on the large subunit. The type of nucleotide bound at the specificity site determines substrate preference. It seems probable that ATP makes the enzyme reduce CDP and UDP, dGTP favors ADP reduction and dTTP favors GDP reduction. Stimulated by ATP and inhibited by dATP binding to the activity site. In terms of biological role, provides the precursors necessary for DNA synthesis. Catalyzes the biosynthesis of deoxyribonucleotides from the corresponding ribonucleotides. This Caenorhabditis elegans protein is Ribonucleoside-diphosphate reductase large subunit (rnr-1).